The following is a 440-amino-acid chain: tRNA-2-methylthio-N(6)-dimethylallyladenosine synthase (440 aa).

An MTTase N-terminal domain is found at 5-121 (KLLYLETFGC…LPELVRAAEK (117 aa)). The [4Fe-4S] cluster site is built by C14, C50, C84, C159, C163, and C166. The 231-residue stretch at 145 to 375 (RTDGVSRFVT…LDLQRRITLE (231 aa)) folds into the Radical SAM core domain. The TRAM domain occupies 378–440 (KSFVGTVQQV…QNSLQGELCR (63 aa)).

It belongs to the methylthiotransferase family. MiaB subfamily. In terms of assembly, monomer. [4Fe-4S] cluster is required as a cofactor.

It is found in the cytoplasm. The enzyme catalyses N(6)-dimethylallyladenosine(37) in tRNA + (sulfur carrier)-SH + AH2 + 2 S-adenosyl-L-methionine = 2-methylsulfanyl-N(6)-dimethylallyladenosine(37) in tRNA + (sulfur carrier)-H + 5'-deoxyadenosine + L-methionine + A + S-adenosyl-L-homocysteine + 2 H(+). Catalyzes the methylthiolation of N6-(dimethylallyl)adenosine (i(6)A), leading to the formation of 2-methylthio-N6-(dimethylallyl)adenosine (ms(2)i(6)A) at position 37 in tRNAs that read codons beginning with uridine. In Geotalea uraniireducens (strain Rf4) (Geobacter uraniireducens), this protein is tRNA-2-methylthio-N(6)-dimethylallyladenosine synthase.